The chain runs to 448 residues: Zinc finger and BTB domain-containing protein 44 (448 aa).

The 68-residue stretch at 31–98 (CDITIRVQDK…AYTATLSINT (68 aa)) folds into the BTB domain. Over residues 289-298 (LSDEEVHEEV) the composition is skewed to basic and acidic residues. Residues 289–320 (LSDEEVHEEVSQPVSASQSSMSDQQTVPGSEQ) form a disordered region. The span at 299-313 (SQPVSASQSSMSDQQ) shows a compositional bias: low complexity. C2H2-type zinc fingers lie at residues 394 to 416 (FQCP…MLIH) and 422 to 444 (FQCD…RLKH).

The protein resides in the nucleus. The chain is Zinc finger and BTB domain-containing protein 44 (zbtb44) from Xenopus tropicalis (Western clawed frog).